Consider the following 506-residue polypeptide: RNA-splicing ligase RtcB homolog (506 aa).

Mn(2+) contacts are provided by Asp120, Cys123, His228, His260, and His354. 227 to 231 (NHYAE) is a binding site for GMP. GMP-binding positions include 354-355 (HN), 403-406 (GGSM), Ser410, 429-432 (HGAG), and Lys505. His429 acts as the GMP-histidine intermediate in catalysis.

The protein belongs to the RtcB family. As to quaternary structure, catalytic component of the tRNA-splicing ligase complex. Mn(2+) is required as a cofactor.

It carries out the reaction a 3'-end 3'-phospho-ribonucleotide-RNA + a 5'-end dephospho-ribonucleoside-RNA + GTP = a ribonucleotidyl-ribonucleotide-RNA + GMP + diphosphate. The enzyme catalyses a 3'-end 2',3'-cyclophospho-ribonucleotide-RNA + a 5'-end dephospho-ribonucleoside-RNA + GTP + H2O = a ribonucleotidyl-ribonucleotide-RNA + GMP + diphosphate + H(+). In terms of biological role, catalytic subunit of the tRNA-splicing ligase complex that acts by directly joining spliced tRNA halves to mature-sized tRNAs by incorporating the precursor-derived splice junction phosphate into the mature tRNA as a canonical 3',5'-phosphodiester. May act as an RNA ligase with broad substrate specificity, and may function toward other RNAs. This is RNA-splicing ligase RtcB homolog from Anopheles gambiae (African malaria mosquito).